The primary structure comprises 127 residues: Small ribosomal subunit protein bS6 (127 aa).

The interval 101–127 (PMMKEEKARDLLQGAKADAPAEQPAAA) is disordered. The segment covering 115-127 (AKADAPAEQPAAA) has biased composition (low complexity).

The protein belongs to the bacterial ribosomal protein bS6 family.

Its function is as follows. Binds together with bS18 to 16S ribosomal RNA. This is Small ribosomal subunit protein bS6 from Thiobacillus denitrificans (strain ATCC 25259 / T1).